A 201-amino-acid chain; its full sequence is Recombination protein RecR (201 aa).

The C4-type zinc finger occupies 57–72 (CADCRTFTEQEVCNIC). A Toprim domain is found at 81 to 176 (GQICVVESPA…EASRIAHGVP (96 aa)).

The protein belongs to the RecR family.

In terms of biological role, may play a role in DNA repair. It seems to be involved in an RecBC-independent recombinational process of DNA repair. It may act with RecF and RecO. In Escherichia coli O17:K52:H18 (strain UMN026 / ExPEC), this protein is Recombination protein RecR.